A 66-amino-acid chain; its full sequence is Toxin Cll1 (66 aa).

Residues 1–66 (KEGYLVNKST…TYPLPNKSCS (66 aa)) form the LCN-type CS-alpha/beta domain. 4 disulfides stabilise this stretch: C12–C65, C16–C41, C25–C46, and C29–C48.

It belongs to the long (4 C-C) scorpion toxin superfamily. Sodium channel inhibitor family. Beta subfamily. Expressed by the venom gland.

The protein resides in the secreted. Functionally, beta toxin that binds site-4 of sodium channels (Nav) and reduces peak current (observed on Nav1.1/SCN1A, Nav1.2/SCN2A, Nav1.3/SCN3A, Nav1.4/SCN5A, Nav1.5/SCN4A, and Nav1.6/SCN8A (IC(50)=44.9 nM)), shifts the voltage of activation toward more negative potentials (observed on Nav1.6, Nav1.1 (weak), Nav1.2 (weak), and Nav1.7 (weak)), and induces resurgent currents at negative voltages following brief and strong depolarizations (observed on Nav1.6, Nav1.1 (weak), Nav1.2 (weak), and Nav1.4 (weak)). This toxin is only active on crustaceans. In Centruroides limpidus (Mexican scorpion), this protein is Toxin Cll1.